Consider the following 202-residue polypeptide: Small ribosomal subunit protein uS4 (202 aa).

The disordered stretch occupies residues 15 to 43; that stretch reads LGDLPGLTRKAAKRSNPPGQHGNARRKRS. One can recognise an S4 RNA-binding domain in the interval 90–152; it reads GRLDNVCFRL…KGSKKLAEGN (63 aa).

The protein belongs to the universal ribosomal protein uS4 family. As to quaternary structure, part of the 30S ribosomal subunit. Contacts protein S5. The interaction surface between S4 and S5 is involved in control of translational fidelity.

In terms of biological role, one of the primary rRNA binding proteins, it binds directly to 16S rRNA where it nucleates assembly of the body of the 30S subunit. Its function is as follows. With S5 and S12 plays an important role in translational accuracy. In Prochlorococcus marinus (strain SARG / CCMP1375 / SS120), this protein is Small ribosomal subunit protein uS4.